A 151-amino-acid chain; its full sequence is Ribosome maturation factor RimP (151 aa).

It belongs to the RimP family.

Its subcellular location is the cytoplasm. Its function is as follows. Required for maturation of 30S ribosomal subunits. The polypeptide is Ribosome maturation factor RimP (Caldicellulosiruptor bescii (strain ATCC BAA-1888 / DSM 6725 / KCTC 15123 / Z-1320) (Anaerocellum thermophilum)).